Consider the following 144-residue polypeptide: Mediator of RNA polymerase II transcription subunit 9 (144 aa).

A coiled-coil region spans residues 85–143 (QDCNHKIFELQKRFESAREQIRQLPGIDFNKEEQQQRLELLRNQLKLKQQLIRKYKDTE).

It belongs to the Mediator complex subunit 9 family. Component of the Mediator complex.

The protein localises to the nucleus. Component of the Mediator complex, a coactivator involved in the regulated transcription of nearly all RNA polymerase II-dependent genes. Mediator functions as a bridge to convey information from gene-specific regulatory proteins to the basal RNA polymerase II transcription machinery. Mediator is recruited to promoters by direct interactions with regulatory proteins and serves as a scaffold for the assembly of a functional preinitiation complex with RNA polymerase II and the general transcription factors. This is Mediator of RNA polymerase II transcription subunit 9 (MED9) from Drosophila melanogaster (Fruit fly).